Here is a 129-residue protein sequence, read N- to C-terminus: uncharacterized protein (129 aa).

The segment covering 86–96 (NDGFSSDDEPE) has biased composition (acidic residues). The disordered stretch occupies residues 86-129 (NDGFSSDDEPEEHVILTEDNQGEPSETPQATFDITEFIKTEDED). Residues 103–117 (EDNQGEPSETPQATF) show a composition bias toward polar residues.

This sequence belongs to the asfivirus D129L family.

This is an uncharacterized protein from African swine fever virus (isolate Tick/South Africa/Pretoriuskop Pr4/1996) (ASFV).